The sequence spans 192 residues: Acetyltransferase PA3944 (192 aa).

The region spanning 18-187 (LLLRAWRDSD…RHILYRVDAA (170 aa)) is the N-acetyltransferase domain. Residues 105 to 107 (WRL), glycine 113, asparagine 145, and 150 to 152 (GLM) contribute to the CoA site.

Functionally, catalyzes the transfer of an acetyl group from acetyl coenzyme A (AcCoA) to an acceptor substrate and releases both CoA and the acetylated product. It prefers the peptide Asp-Phe methyl ester (or aspartame) and the peptide antibiotics polymyxin B and colistin. Other substrates like dopamine, serotonin, puromycin, chloramphenicol, D-glucosamine, glycine and N-alpha-acetyl-L-glutamine are used and displayed lower activity. In Pseudomonas aeruginosa (strain ATCC 15692 / DSM 22644 / CIP 104116 / JCM 14847 / LMG 12228 / 1C / PRS 101 / PAO1), this protein is Acetyltransferase PA3944.